We begin with the raw amino-acid sequence, 447 residues long: Asparagine--tRNA ligase (447 aa).

It belongs to the class-II aminoacyl-tRNA synthetase family. As to quaternary structure, homodimer.

The protein resides in the cytoplasm. It carries out the reaction tRNA(Asn) + L-asparagine + ATP = L-asparaginyl-tRNA(Asn) + AMP + diphosphate + H(+). In Herpetosiphon aurantiacus (strain ATCC 23779 / DSM 785 / 114-95), this protein is Asparagine--tRNA ligase.